The chain runs to 428 residues: Dihydroorotase (428 aa).

2 residues coordinate Zn(2+): histidine 59 and histidine 61. Substrate-binding positions include histidine 61–arginine 63 and asparagine 93. Residues aspartate 151, histidine 178, and histidine 231 each contribute to the Zn(2+) site. Asparagine 277 serves as a coordination point for substrate. A Zn(2+)-binding site is contributed by aspartate 304. Aspartate 304 is an active-site residue. Substrate-binding positions include histidine 308 and phenylalanine 322–glycine 323.

This sequence belongs to the metallo-dependent hydrolases superfamily. DHOase family. Class I DHOase subfamily. Zn(2+) is required as a cofactor.

It carries out the reaction (S)-dihydroorotate + H2O = N-carbamoyl-L-aspartate + H(+). The protein operates within pyrimidine metabolism; UMP biosynthesis via de novo pathway; (S)-dihydroorotate from bicarbonate: step 3/3. Catalyzes the reversible cyclization of carbamoyl aspartate to dihydroorotate. In Bacillus cereus (strain ATCC 14579 / DSM 31 / CCUG 7414 / JCM 2152 / NBRC 15305 / NCIMB 9373 / NCTC 2599 / NRRL B-3711), this protein is Dihydroorotase.